The sequence spans 319 residues: Ribonucleoside-diphosphate reductase small chain (319 aa).

Residues Asp70, Glu101, and His104 each coordinate Fe cation. Tyr108 is an active-site residue. The Fe cation site is built by Glu163, Glu197, and His200. Residues Phe313 to Phe319 are interaction with R1.

This sequence belongs to the ribonucleoside diphosphate reductase small chain family. As to quaternary structure, interacts with RNR1/OPG080 subunit. Can interact with host RNR1 supunit. It depends on Fe cation as a cofactor.

It catalyses the reaction a 2'-deoxyribonucleoside 5'-diphosphate + [thioredoxin]-disulfide + H2O = a ribonucleoside 5'-diphosphate + [thioredoxin]-dithiol. Its function is as follows. Ribonucleoside-diphosphate reductase holoenzyme provides the precursors necessary for viral DNA synthesis. Allows virus growth in non-dividing cells. Catalyzes the biosynthesis of deoxyribonucleotides from the corresponding ribonucleotides. This Bos taurus (Bovine) protein is Ribonucleoside-diphosphate reductase small chain (OPG048).